Here is a 256-residue protein sequence, read N- to C-terminus: uncharacterized protein (256 aa).

This is an uncharacterized protein from Acanthamoeba polyphaga mimivirus (APMV).